The primary structure comprises 463 residues: Asparagine--tRNA ligase (463 aa).

The protein belongs to the class-II aminoacyl-tRNA synthetase family. Homodimer.

The protein resides in the cytoplasm. It carries out the reaction tRNA(Asn) + L-asparagine + ATP = L-asparaginyl-tRNA(Asn) + AMP + diphosphate + H(+). This is Asparagine--tRNA ligase from Clostridium botulinum (strain Langeland / NCTC 10281 / Type F).